Reading from the N-terminus, the 1041-residue chain is Importin-9 (1041 aa).

Residue Ala2 is modified to N-acetylalanine. An Importin N-terminal domain is found at 43 to 119 (AEEQIKVLEV…RELLPNGLRE (77 aa)). The interval 936–967 (QATPAEWSQDDSNDMWEDQEEEEEEEEDGLAG) is disordered. Over residues 943–964 (SQDDSNDMWEDQEEEEEEEEDG) the composition is skewed to acidic residues.

This sequence belongs to the importin beta family. Interacts with histones H2A, H2B, H3 and H4. The binding is coupled to RanGTP cycles. Interacts with AKIRIN2; promoting association with pre-assembled proteasomes. Associates with pre-assembled proteasomes; interaction is indirect and mediated via interaction with AKIRIN2. Interacts with PPP2R1A and PPP2R1B.

The protein localises to the cytoplasm. The protein resides in the nucleus. In terms of biological role, nuclear transport receptor that mediates nuclear import of proteins, such as histones, proteasome and actin. Serves as receptor for nuclear localization signals (NLS) in cargo substrates. Is thought to mediate docking of the importin/substrate complex to the nuclear pore complex (NPC) through binding to nucleoporin and the complex is subsequently translocated through the pore by an energy requiring, Ran-dependent mechanism. At the nucleoplasmic side of the NPC, Ran binds to the importin, the importin/substrate complex dissociates and importin is re-exported from the nucleus to the cytoplasm where GTP hydrolysis releases Ran. The directionality of nuclear import is thought to be conferred by an asymmetric distribution of the GTP- and GDP-bound forms of Ran between the cytoplasm and nucleus. Mediates the import of pre-assembled proteasomes into the nucleus; AKIRIN2 acts as a molecular bridge between IPO9 and the proteasome complex. Mediates the nuclear import of histones H2A, H2B, H4 and H4. In addition to nuclear import, also acts as a chaperone for histones by preventing inappropriate non-nucleosomal interactions. Mediates the nuclear import of actin. This Homo sapiens (Human) protein is Importin-9.